The chain runs to 386 residues: NifS-like protein (386 aa).

Pyridoxal 5'-phosphate-binding positions include 58 to 59 and 184 to 186; these read SE and SIN.

This sequence belongs to the class-V pyridoxal-phosphate-dependent aminotransferase family. NifS/IscS subfamily. The cofactor is pyridoxal 5'-phosphate.

Its subcellular location is the virion. This chain is NifS-like protein, found in Ornithodoros (relapsing fever ticks).